The primary structure comprises 296 residues: Small ribosomal subunit biogenesis GTPase RsgA (296 aa).

The region spanning 65 to 223 (INRIGRPAVA…LADTPGFSSI (159 aa)) is the CP-type G domain. GTP-binding positions include 114 to 117 (SKAD) and 166 to 174 (GQSGAGKST). Zn(2+) contacts are provided by Cys-247, Cys-252, His-254, and Cys-260.

It belongs to the TRAFAC class YlqF/YawG GTPase family. RsgA subfamily. In terms of assembly, monomer. Associates with 30S ribosomal subunit, binds 16S rRNA. Zn(2+) is required as a cofactor.

It is found in the cytoplasm. Functionally, one of several proteins that assist in the late maturation steps of the functional core of the 30S ribosomal subunit. Helps release RbfA from mature subunits. May play a role in the assembly of ribosomal proteins into the subunit. Circularly permuted GTPase that catalyzes slow GTP hydrolysis, GTPase activity is stimulated by the 30S ribosomal subunit. This Lactobacillus acidophilus (strain ATCC 700396 / NCK56 / N2 / NCFM) protein is Small ribosomal subunit biogenesis GTPase RsgA.